The following is a 338-amino-acid chain: D-erythrose-4-phosphate dehydrogenase (338 aa).

12-13 is a binding site for NAD(+); the sequence is RI. Residues 154–156, R200, 213–214, and R236 each bind substrate; these read SCT and TK. C155 acts as the Nucleophile in catalysis. An NAD(+)-binding site is contributed by N318.

Belongs to the glyceraldehyde-3-phosphate dehydrogenase family. Epd subfamily. As to quaternary structure, homotetramer.

It localises to the cytoplasm. It carries out the reaction D-erythrose 4-phosphate + NAD(+) + H2O = 4-phospho-D-erythronate + NADH + 2 H(+). The protein operates within cofactor biosynthesis; pyridoxine 5'-phosphate biosynthesis; pyridoxine 5'-phosphate from D-erythrose 4-phosphate: step 1/5. Catalyzes the NAD-dependent conversion of D-erythrose 4-phosphate to 4-phosphoerythronate. This Tolumonas auensis (strain DSM 9187 / NBRC 110442 / TA 4) protein is D-erythrose-4-phosphate dehydrogenase.